The primary structure comprises 432 residues: Trigger factor (432 aa).

The PPIase FKBP-type domain occupies 161 to 246 (GKRVSIDFVG…VNKVEARQLP (86 aa)).

The protein belongs to the FKBP-type PPIase family. Tig subfamily.

It localises to the cytoplasm. The enzyme catalyses [protein]-peptidylproline (omega=180) = [protein]-peptidylproline (omega=0). In terms of biological role, involved in protein export. Acts as a chaperone by maintaining the newly synthesized protein in an open conformation. Functions as a peptidyl-prolyl cis-trans isomerase. This chain is Trigger factor, found in Vibrio vulnificus (strain YJ016).